Consider the following 209-residue polypeptide: Probable E3 ubiquitin-protein ligase NleG7 (209 aa).

Belongs to the NleG E3 ligase family. Post-translationally, two sizes of protein are detected in situ; only the smaller protein is secreted.

The protein resides in the secreted. The protein localises to the host cytoplasm. The catalysed reaction is S-ubiquitinyl-[E2 ubiquitin-conjugating enzyme]-L-cysteine + [acceptor protein]-L-lysine = [E2 ubiquitin-conjugating enzyme]-L-cysteine + N(6)-ubiquitinyl-[acceptor protein]-L-lysine.. Its function is as follows. Effector proteins function to alter host cell physiology and promote bacterial survival in host tissues. This protein is probably an E3 ubiquitin-protein ligase that interferes with the host's ubiquitination pathway and targets host proteins for proteasomal degradation. Mice infected with a strain of bacteria deleted for this gene were colonized less quickly by bacteria. This Citrobacter rodentium protein is Probable E3 ubiquitin-protein ligase NleG7.